The chain runs to 330 residues: Aspartate--ammonia ligase (330 aa).

The protein belongs to the class-II aminoacyl-tRNA synthetase family. AsnA subfamily.

The protein resides in the cytoplasm. It carries out the reaction L-aspartate + NH4(+) + ATP = L-asparagine + AMP + diphosphate + H(+). The protein operates within amino-acid biosynthesis; L-asparagine biosynthesis; L-asparagine from L-aspartate (ammonia route): step 1/1. The sequence is that of Aspartate--ammonia ligase from Streptococcus pneumoniae serotype 2 (strain D39 / NCTC 7466).